The chain runs to 540 residues: MSSVTENGDVTAGKPNEEKTYKKTTSSAIKGAIQLGIGYTVGNLTSKPDRDVLMQDFYVVESVFLPSEGSNLTPAHHYPDFRFKTYAPLAFRYFRELFGIKPDDYLYSICSEPLIELSNPGASGSLFFVTSDDEFIIKTVQHKEAEFLQKLLPGYYMNLNQNPRTLLPKFYGLYCVQSGGINIRIVVMNNVLPRALKMNFTYDLKGSTYKRRASRKEREKSNPTFKDLDFLQDMHEGLYFDSETHSALMKTLQRDCRVLESFKIMDYSLLLGIHVLNSNVREKEGESSQNASDGKRPGGQKVLYSTAMESIQGPGKSGDSVVTETTNTMGGIPAKSHKGEKLLLFMGIIDILQSYRLMKKLEHSWKALVYDGDTVSVHRPSFYADRFLKFMNTRVFKKVQALRSSPSKKRCNSITALKATSQEIVSAVSQEWKDEKHSIITEGQSYSSLDEEVLGSRRRPDLVPSTPSLFEAASLATTVSSSSLNVDERYQRDQTMLYSSSKELPSSSTFTLEDSAIYLTSEQSTLETENDNASVLDVYL.

A disordered region spans residues 1–23 (MSSVTENGDVTAGKPNEEKTYKK). In terms of domain architecture, PIPK spans 25–395 (TSSAIKGAIQ…RFLKFMNTRV (371 aa)).

It is found in the cytoplasm. The protein localises to the cytosol. Its subcellular location is the cell membrane. It localises to the endomembrane system. The enzyme catalyses a 1,2-diacyl-sn-glycero-3-phospho-(1D-myo-inositol 4-phosphate) + ATP = a 1,2-diacyl-sn-glycero-3-phospho-(1D-myo-inositol-4,5-bisphosphate) + ADP + H(+). It catalyses the reaction 1-octadecanoyl-2-(5Z,8Z,11Z,14Z)-eicosatetraenoyl-sn-glycero-3-phospho-1D-myo-inositol 4-phosphate + ATP = 1-octadecanoyl-2-(5Z,8Z,11Z,14Z)-eicosatetraenoyl-sn-glycero-3-phospho-1D-myo-inositol 4,5-bisphosphate + ADP + H(+). It carries out the reaction 1-octadecanoyl-2-(9Z)-octadecenoyl-sn-glycero-3-phospho-1D-myo-inositol 4-phosphate + ATP = 1-octadecanoyl-2-(9Z)-octadecenoyl-sn-glycero-3-phospho-1D-myo-inositol 4,5-bisphosphate + ADP + H(+). The catalysed reaction is 1-octadecanoyl-2-(9Z)-octadecenoyl-sn-glycero-3-phospho-1D-myo-inositol + ATP = 1-octadecanoyl-2-(9Z)-octadecenoyl-sn-glycero-3-phospho-1D-myo-inositol 5-phosphate + ADP + H(+). The enzyme catalyses 1-octadecanoyl-2-(9Z,12Z)-octadecadienoyl-sn-glycero-3-phospho-1D-myo-inositol + ATP = 1-octadecanoyl-2-(9Z,12Z)-octadecadienoyl-sn-glycero-3-phospho-1D-myo-inositol 5-phosphate + ADP + H(+). It catalyses the reaction 1-octadecanoyl-2-(5Z,8Z,11Z,14Z-eicosatetraenoyl)-sn-glycero-3-phospho-(1D-myo-inositol) + ATP = 1-octadecanoyl-2-(5Z,8Z,11Z,14Z)-eicosatetraenoyl-sn-glycero-3-phospho-1D-myo-inositol 5-phosphate + ADP + H(+). It carries out the reaction 1,2-di-(9Z,12Z)-octadecadienoyl-sn-glycero-3-phospho-1D-myo-inositol + ATP = 1,2-di(9Z,12Z)-octadecadienoyl-sn-glycero-3-phospho-1D-myo-inositol 5-phosphate + ADP + H(+). In terms of biological role, catalyzes the phosphorylation of phosphatidylinositol 4-phosphate (PtdIns(4)P/PI4P) to form phosphatidylinositol 4,5-bisphosphate (PtdIns(4,5)P2/PIP2), a lipid second messenger that regulates several cellular processes such as signal transduction, vesicle trafficking, actin cytoskeleton dynamics, cell adhesion, and cell motility. PtdIns(4,5)P2 can directly act as a second messenger or can be utilized as a precursor to generate other second messengers: inositol 1,4,5-trisphosphate (IP3), diacylglycerol (DAG) or phosphatidylinositol-3,4,5-trisphosphate (PtdIns(3,4,5)P3/PIP3). The chain is Phosphatidylinositol 4-phosphate 5-kinase type-1 beta (PIP5K1B) from Gallus gallus (Chicken).